A 253-amino-acid polypeptide reads, in one-letter code: DNA repair protein RecO (253 aa).

It belongs to the RecO family.

Involved in DNA repair and RecF pathway recombination. The sequence is that of DNA repair protein RecO from Dehalococcoides mccartyi (strain ATCC BAA-2266 / KCTC 15142 / 195) (Dehalococcoides ethenogenes (strain 195)).